The chain runs to 489 residues: MHLKKGKRSIGTVWRLLWKRLYSVHYKTNTYSTRSRKKLVTNFTRVNGLLLSCNGDTFPYMRTLWRYFNAPGNLMFVTTNIITFTGIVAYNTMVTVSNERVFEEQMIAAQMSLAKQKEELETRALDFPANHEQIKEADDANCEQPAIERSGEDRSVKQQNEQLDSPIRHYSLTDLVLNKEARVADYDSQRVKASLFHMLYAYMLYRDTIQPNSDSPNHNSEEWRHEVELLTRDKWLQGAHQRIDVFYDLWNNQLDKIVTSPEKVQNFHLPNWSKYPTLLKFICTELHNNELTTLDEFKQFYGKVRSNEVKKLLGLWLYDHSFLFPRNIYDNKNQEVFYDTLISDSMQDNKIFQKYSSIVMNPDNERTQLFFPNIYAQPVNKPIPSISLETYTRLLRGYITLQETNCKYDYNDNIFKLISILKMNCFLQHDKKIRTGASVRILLPRDEDRSPVLNTIPQAEKKTCYQILSKNRDILALLKRISDIQIDSS.

It localises to the mitochondrion inner membrane. Functionally, required for the expression of the mitochondrial gene for cytochrome c oxidase subunit III (COX3). This chain is COX3 mRNA-specific translational activator PET494 (PET494), found in Saccharomyces bayanus (Yeast).